A 404-amino-acid polypeptide reads, in one-letter code: tRNA pseudouridine synthase D (404 aa).

Catalysis depends on Asp-79, which acts as the Nucleophile. The 211-residue stretch at 154–364 folds into the TRUD domain; the sequence is GVPNRFGEQR…MEGERRPLRV (211 aa).

It belongs to the pseudouridine synthase TruD family.

The catalysed reaction is uridine(13) in tRNA = pseudouridine(13) in tRNA. Responsible for synthesis of pseudouridine from uracil-13 in transfer RNAs. This is tRNA pseudouridine synthase D from Geobacter metallireducens (strain ATCC 53774 / DSM 7210 / GS-15).